A 127-amino-acid chain; its full sequence is uncharacterized protein (127 aa).

Thr30 carries the post-translational modification Phosphothreonine. The segment at 51–75 (APTYEQVLYPPASQKKTSNSTSEES) is disordered. The residue at position 63 (Ser63) is a Phosphoserine.

This is an uncharacterized protein from Mus musculus (Mouse).